Reading from the N-terminus, the 277-residue chain is Large ribosomal subunit protein uL2c (277 aa).

Disordered regions lie at residues 24–57 and 226–266; these read IVQS…RGGG and NAAD…HKYS.

The protein belongs to the universal ribosomal protein uL2 family. In terms of assembly, part of the 50S ribosomal subunit.

It is found in the plastid. The protein resides in the chloroplast. The polypeptide is Large ribosomal subunit protein uL2c (rpl2) (Zygnema circumcarinatum (Green alga)).